The sequence spans 647 residues: Putative ankyrin repeat protein L764 (647 aa).

ANK repeat units follow at residues 123–154 (LKDREIYLNSNCDDINLIKFIVTRNDYFQINL), 202–231 (LTQEHIKLAVQNRKIPVLEHLINLGIEYDL), 233–256 (EIINDIKDFDILKYMLEIGNSLNE), 258–284 (NVNIIIFNIHTTQLIEYLMNLGYTINS), 289–319 (SMFSHMLIVSENTDIVEFLKSINAKDSDLTV), 348–377 (DCNLFLKYAIISQDIPNIEYSINKGADLKK), 401–431 (NDVNNFILKIIENDCIETLKYLVDNNYNIDL), 529–558 (FILKEFPEECSSEKMDTIKFLLDFNADNNE), and 588–617 (NGQNIVEYLISDGDHEIFRYLYYNGFDVKN).

In Acanthamoeba polyphaga (Amoeba), this protein is Putative ankyrin repeat protein L764.